A 232-amino-acid polypeptide reads, in one-letter code: 2,3,4,5-tetrahydropyridine-2,6-dicarboxylate N-acetyltransferase (232 aa).

Belongs to the transferase hexapeptide repeat family. DapH subfamily.

The enzyme catalyses (S)-2,3,4,5-tetrahydrodipicolinate + acetyl-CoA + H2O = L-2-acetamido-6-oxoheptanedioate + CoA. It participates in amino-acid biosynthesis; L-lysine biosynthesis via DAP pathway; LL-2,6-diaminopimelate from (S)-tetrahydrodipicolinate (acetylase route): step 1/3. Functionally, catalyzes the transfer of an acetyl group from acetyl-CoA to tetrahydrodipicolinate. This chain is 2,3,4,5-tetrahydropyridine-2,6-dicarboxylate N-acetyltransferase, found in Kosmotoga olearia (strain ATCC BAA-1733 / DSM 21960 / TBF 19.5.1).